We begin with the raw amino-acid sequence, 529 residues long: Peptide chain release factor 3 (529 aa).

The tr-type G domain maps to Ala-11–Met-280. Residues Ser-20–Thr-27, Asp-88–His-92, and Asn-142–Asp-145 each bind GTP.

The protein belongs to the TRAFAC class translation factor GTPase superfamily. Classic translation factor GTPase family. PrfC subfamily.

The protein localises to the cytoplasm. Functionally, increases the formation of ribosomal termination complexes and stimulates activities of RF-1 and RF-2. It binds guanine nucleotides and has strong preference for UGA stop codons. It may interact directly with the ribosome. The stimulation of RF-1 and RF-2 is significantly reduced by GTP and GDP, but not by GMP. The sequence is that of Peptide chain release factor 3 from Escherichia coli O8 (strain IAI1).